A 127-amino-acid chain; its full sequence is uncharacterized protein (127 aa).

This is an uncharacterized protein from Rickettsia conorii (strain ATCC VR-613 / Malish 7).